Reading from the N-terminus, the 79-residue chain is Acyl carrier protein (79 aa).

Positions S2–V77 constitute a Carrier domain. Position 37 is an O-(pantetheine 4'-phosphoryl)serine (S37).

This sequence belongs to the acyl carrier protein (ACP) family. Post-translationally, 4'-phosphopantetheine is transferred from CoA to a specific serine of apo-ACP by AcpS. This modification is essential for activity because fatty acids are bound in thioester linkage to the sulfhydryl of the prosthetic group.

It is found in the cytoplasm. It participates in lipid metabolism; fatty acid biosynthesis. In terms of biological role, carrier of the growing fatty acid chain in fatty acid biosynthesis. This chain is Acyl carrier protein, found in Janthinobacterium sp. (strain Marseille) (Minibacterium massiliensis).